A 223-amino-acid chain; its full sequence is Serine/threonine/tyrosine-interacting protein (223 aa).

Residues 28–176 form the Tyrosine-protein phosphatase domain; it reads EMQEVLPGLF…LQEYEAIYLA (149 aa). An Interaction with FBXW7 motif is present at residues 76–78; that stretch reads FQQ. Phosphoserine is present on residues Ser-184 and Ser-201. The tract at residues 199 to 223 is disordered; the sequence is TGSVKRTHEEDDDFGNMQVATAQNG.

This sequence belongs to the protein-tyrosine phosphatase family. Non-receptor class subfamily. As to quaternary structure, interacts with MAPK1; independently of MAPK1 phosphorylation status. Interacts with CARHSP1/Crhsp-24. Interacts (via FQQ motif) with FBXW7 (via F-box domain); the interaction is direct and prevents FBXW7 interaction with SKP1, a component of the SCF(FBXW7) complex. In terms of tissue distribution, widely expressed with highest levels in muscle, testis and brain. In testis, expression starts 13-14 days after birth and is limited to the seminiferous tubule and to round and elongating spermatids. Expression is low in condensing spermatids and pachytene spermatocytes, and absent in spermatogonia, spermatozoa and somatic Sertoli cells.

The protein resides in the nucleus. Its subcellular location is the cytoplasm. It is found in the cytosol. Catalytically inactive phosphatase. Acts as a nuclear anchor for MAPK1/MAPK3 (ERK1/ERK2). Modulates cell-fate decisions and cell migration by spatiotemporal regulation of MAPK1/MAPK3 (ERK1/ERK2). By binding to the F-box of FBXW7, prevents the assembly of FBXW7 into the SCF E3 ubiquitin-protein ligase complex, and thereby inhibits degradation of its substrates. Plays a role in spermatogenesis. The chain is Serine/threonine/tyrosine-interacting protein from Mus musculus (Mouse).